Consider the following 137-residue polypeptide: Large ribosomal subunit protein uL16 (137 aa).

This sequence belongs to the universal ribosomal protein uL16 family. As to quaternary structure, part of the 50S ribosomal subunit.

In terms of biological role, binds 23S rRNA and is also seen to make contacts with the A and possibly P site tRNAs. The protein is Large ribosomal subunit protein uL16 of Methylocella silvestris (strain DSM 15510 / CIP 108128 / LMG 27833 / NCIMB 13906 / BL2).